The chain runs to 420 residues: Glutamyl-tRNA reductase (420 aa).

Substrate contacts are provided by residues 49-52, Ser-109, 114-116, and Gln-120; these read TCNR and EPQ. Residue Cys-50 is the Nucleophile of the active site. 189–194 lines the NADP(+) pocket; that stretch reads GAGETI.

This sequence belongs to the glutamyl-tRNA reductase family. In terms of assembly, homodimer.

It carries out the reaction (S)-4-amino-5-oxopentanoate + tRNA(Glu) + NADP(+) = L-glutamyl-tRNA(Glu) + NADPH + H(+). It participates in porphyrin-containing compound metabolism; protoporphyrin-IX biosynthesis; 5-aminolevulinate from L-glutamyl-tRNA(Glu): step 1/2. In terms of biological role, catalyzes the NADPH-dependent reduction of glutamyl-tRNA(Glu) to glutamate 1-semialdehyde (GSA). The chain is Glutamyl-tRNA reductase from Serratia proteamaculans (strain 568).